The following is a 402-amino-acid chain: Nicotinate phosphoribosyltransferase (402 aa).

Histidine 224 bears the Phosphohistidine; by autocatalysis mark.

This sequence belongs to the NAPRTase family. In terms of processing, transiently phosphorylated on a His residue during the reaction cycle. Phosphorylation strongly increases the affinity for substrates and increases the rate of nicotinate D-ribonucleotide production. Dephosphorylation regenerates the low-affinity form of the enzyme, leading to product release.

It catalyses the reaction nicotinate + 5-phospho-alpha-D-ribose 1-diphosphate + ATP + H2O = nicotinate beta-D-ribonucleotide + ADP + phosphate + diphosphate. Its pathway is cofactor biosynthesis; NAD(+) biosynthesis; nicotinate D-ribonucleotide from nicotinate: step 1/1. Its function is as follows. Catalyzes the synthesis of beta-nicotinate D-ribonucleotide from nicotinate and 5-phospho-D-ribose 1-phosphate at the expense of ATP. In Neisseria meningitidis serogroup C (strain 053442), this protein is Nicotinate phosphoribosyltransferase.